The sequence spans 199 residues: Thymidine kinase (199 aa).

Residues 15–22 (GSMFSGKS) and 88–91 (DEVQ) contribute to the ATP site. Glu89 functions as the Proton acceptor in the catalytic mechanism. Cys145, Cys148, Cys183, and His186 together coordinate Zn(2+).

This sequence belongs to the thymidine kinase family. In terms of assembly, homotetramer.

The protein localises to the cytoplasm. The catalysed reaction is thymidine + ATP = dTMP + ADP + H(+). This Staphylococcus aureus (strain USA300) protein is Thymidine kinase.